The sequence spans 250 residues: MIIPAIDLIDGQVVRLYQGDYDKQTTFDLSPLAQLKSYQDQGAKLLHIVDLTGAKDPNQRQIKLISELVAGLDVDIQVGGGIRSEQQVTELLAIGVKRVVIGSLAVKEPELVKSWLNKYGSDAICLALDVNINANGEKIVAVSGWQSAGGKTLESLVAEFERPGSKQTALKHALVTDISRDGTLTGANTALYTELAAAYPTILWQASGGIATLDDVSAVKDSKAAGIIIGKALLINQFTVEEAIQCWPNA.

The active-site Proton acceptor is the aspartate 7. Aspartate 129 (proton donor) is an active-site residue.

The protein belongs to the HisA/HisF family.

It is found in the cytoplasm. The enzyme catalyses 1-(5-phospho-beta-D-ribosyl)-5-[(5-phospho-beta-D-ribosylamino)methylideneamino]imidazole-4-carboxamide = 5-[(5-phospho-1-deoxy-D-ribulos-1-ylimino)methylamino]-1-(5-phospho-beta-D-ribosyl)imidazole-4-carboxamide. The protein operates within amino-acid biosynthesis; L-histidine biosynthesis; L-histidine from 5-phospho-alpha-D-ribose 1-diphosphate: step 4/9. The protein is 1-(5-phosphoribosyl)-5-[(5-phosphoribosylamino)methylideneamino] imidazole-4-carboxamide isomerase of Shewanella denitrificans (strain OS217 / ATCC BAA-1090 / DSM 15013).